The following is a 147-amino-acid chain: Small ribosomal subunit protein uS12 (147 aa).

Belongs to the universal ribosomal protein uS12 family. In terms of assembly, part of the 30S ribosomal subunit.

With S4 and S5 plays an important role in translational accuracy. Located at the interface of the 30S and 50S subunits. In Ignicoccus hospitalis (strain KIN4/I / DSM 18386 / JCM 14125), this protein is Small ribosomal subunit protein uS12.